Here is a 158-residue protein sequence, read N- to C-terminus: 6,7-dimethyl-8-ribityllumazine synthase (158 aa).

Residues Phe23, Ser61 to Glu63, and Ala85 to Ile87 contribute to the 5-amino-6-(D-ribitylamino)uracil site. Glu90–Thr91 contributes to the (2S)-2-hydroxy-3-oxobutyl phosphate binding site. His93 functions as the Proton donor in the catalytic mechanism. Phe118 contributes to the 5-amino-6-(D-ribitylamino)uracil binding site. A (2S)-2-hydroxy-3-oxobutyl phosphate-binding site is contributed by Arg132.

This sequence belongs to the DMRL synthase family.

The enzyme catalyses (2S)-2-hydroxy-3-oxobutyl phosphate + 5-amino-6-(D-ribitylamino)uracil = 6,7-dimethyl-8-(1-D-ribityl)lumazine + phosphate + 2 H2O + H(+). The protein operates within cofactor biosynthesis; riboflavin biosynthesis; riboflavin from 2-hydroxy-3-oxobutyl phosphate and 5-amino-6-(D-ribitylamino)uracil: step 1/2. Catalyzes the formation of 6,7-dimethyl-8-ribityllumazine by condensation of 5-amino-6-(D-ribitylamino)uracil with 3,4-dihydroxy-2-butanone 4-phosphate. This is the penultimate step in the biosynthesis of riboflavin. The protein is 6,7-dimethyl-8-ribityllumazine synthase of Prochlorococcus marinus subsp. pastoris (strain CCMP1986 / NIES-2087 / MED4).